A 94-amino-acid chain; its full sequence is Large ribosomal subunit protein uL22 (94 aa).

The protein belongs to the universal ribosomal protein uL22 family. As to quaternary structure, part of the 50S ribosomal subunit.

Its function is as follows. This protein binds specifically to 23S rRNA; its binding is stimulated by other ribosomal proteins, e.g. L4, L17, and L20. It is important during the early stages of 50S assembly. It makes multiple contacts with different domains of the 23S rRNA in the assembled 50S subunit and ribosome. Functionally, the globular domain of the protein is located near the polypeptide exit tunnel on the outside of the subunit, while an extended beta-hairpin is found that lines the wall of the exit tunnel in the center of the 70S ribosome. This chain is Large ribosomal subunit protein uL22 (rplV), found in Tomato big bud phytoplasma.